A 39-amino-acid polypeptide reads, in one-letter code: Photosystem II reaction center protein L (39 aa).

Residues 18 to 38 (SLYLGLLIVFTTGILFSSYFF) traverse the membrane as a helical segment.

It belongs to the PsbL family. In terms of assembly, PSII is composed of 1 copy each of membrane proteins PsbA, PsbB, PsbC, PsbD, PsbE, PsbF, PsbH, PsbI, PsbJ, PsbK, PsbL, PsbM, PsbT, PsbX, PsbY, PsbZ, Psb30/Ycf12, peripheral proteins PsbO, CyanoQ (PsbQ), PsbU, PsbV and a large number of cofactors. It forms dimeric complexes.

It is found in the cellular thylakoid membrane. Functionally, one of the components of the core complex of photosystem II (PSII). PSII is a light-driven water:plastoquinone oxidoreductase that uses light energy to abstract electrons from H(2)O, generating O(2) and a proton gradient subsequently used for ATP formation. It consists of a core antenna complex that captures photons, and an electron transfer chain that converts photonic excitation into a charge separation. This subunit is found at the monomer-monomer interface and is required for correct PSII assembly and/or dimerization. This chain is Photosystem II reaction center protein L, found in Synechococcus sp. (strain CC9311).